The following is a 336-amino-acid chain: Aspartate--ammonia ligase (336 aa).

It belongs to the class-II aminoacyl-tRNA synthetase family. AsnA subfamily.

Its subcellular location is the cytoplasm. The enzyme catalyses L-aspartate + NH4(+) + ATP = L-asparagine + AMP + diphosphate + H(+). It participates in amino-acid biosynthesis; L-asparagine biosynthesis; L-asparagine from L-aspartate (ammonia route): step 1/1. The polypeptide is Aspartate--ammonia ligase (Lactobacillus johnsonii (strain CNCM I-12250 / La1 / NCC 533)).